Here is a 143-residue protein sequence, read N- to C-terminus: Late embryogenesis abundant protein 1 (143 aa).

Positions 1 to 17 (MSSQQNQNRQGEQQEQG) are enriched in low complexity. The disordered stretch occupies residues 1–143 (MSSQQNQNRQ…QAGEKVKGRD (143 aa)). Tandem repeats lie at residues 47–57 (KTAEFRDSAGE), 69–79 (KGQEFKERAGE), 80–90 (KAEETKQRAGE), and 91–101 (KMDETKQRAGE). Basic and acidic residues-rich tracts occupy residues 47 to 60 (KTAE…ETIR) and 69 to 143 (KGQE…KGRD). Residues 47–101 (KTAEFRDSAGETIRDLTGQAQEKGQEFKERAGEKAEETKQRAGEKMDETKQRAGE) are 4 X 11 AA approximate repeats.

Belongs to the LEA type 4 family.

In terms of biological role, may be involved in defense against water stress. The sequence is that of Late embryogenesis abundant protein 1 from Aphelenchoides avenae (Mycophagous nematode worm).